The sequence spans 103 residues: Cysteine-rich and transmembrane domain-containing protein 1 (103 aa).

Residues 1–45 (MNQGNPPPYPGPGPTAPYPPYPSQPMGPGFYPPGPPGGPYPPPQG) are compositionally biased toward pro residues. Residues 1–66 (MNQGNPPPYP…WQGGPQEPPK (66 aa)) are disordered. Low complexity predominate over residues 46 to 56 (GYPYQGYPQYG). Residues 80–97 (LGTSTCLTACWTALCCCC) form a helical membrane-spanning segment.

Belongs to the CYSTM1 family.

The protein resides in the membrane. The polypeptide is Cysteine-rich and transmembrane domain-containing protein 1 (CYSTM1) (Bos taurus (Bovine)).